A 266-amino-acid polypeptide reads, in one-letter code: Nickel import ATP-binding protein NikE (266 aa).

One can recognise an ABC transporter domain in the interval 4-252; the sequence is ISADNIVKIY…RHPASRLLRE (249 aa). 45-52 provides a ligand contact to ATP; the sequence is GRSGCGKS.

The protein belongs to the ABC transporter superfamily. Nickel importer (TC 3.A.1.5.3) family. In terms of assembly, the complex is composed of two ATP-binding proteins (NikD and NikE), two transmembrane proteins (NikB and NikC) and a solute-binding protein (NikA).

Its subcellular location is the cell inner membrane. It catalyses the reaction Ni(2+)(out) + ATP + H2O = Ni(2+)(in) + ADP + phosphate + H(+). In terms of biological role, part of the ABC transporter complex NikABCDE involved in nickel import. Responsible for energy coupling to the transport system. This Brucella abortus (strain 2308) protein is Nickel import ATP-binding protein NikE.